The sequence spans 345 residues: Serine/arginine-rich splicing factor 6 (345 aa).

The RRM 1 domain occupies 1–72; the sequence is MPRVYIGRLS…ERVIVEHARG (72 aa). A phosphoserine mark is found at serine 45, serine 81, and serine 84. A disordered region spans residues 75–102; the sequence is RDRDGYSYGSRSGGGGYSSRRTSGRDKY. The RRM 2 domain occupies 110–183; that stretch reads FRLIVENLSS…RNIRLIEDKP (74 aa). N6-acetyllysine is present on lysine 165. The tract at residues 176-345 is disordered; the sequence is IRLIEDKPRT…RSRSRSSSRD (170 aa). Lysine 182 is covalently cross-linked (Glycyl lysine isopeptide (Lys-Gly) (interchain with G-Cter in SUMO2)). A compositionally biased stretch (basic residues) spans 185–250; the sequence is TSHRRSYSGS…RKSRSKSKSK (66 aa). Composition is skewed to basic and acidic residues over residues 264–273 and 282–293; these read RSKDEYEKSR and SPKENGKGDIKS. Phosphoserine occurs at positions 299 and 301. Serine 305 carries the phosphoserine; by DYRK1A modification. Phosphoserine is present on residues serine 316 and serine 318. The segment covering 323–345 has biased composition (basic residues); the sequence is RASRSHSRSRSKSRSRSRSSSRD.

This sequence belongs to the splicing factor SR family. In terms of assembly, binds SREK1/SFRS12. Interacts with DYRK1A. Extensively phosphorylated on serine residues in the RS domain. Phosphorylated by DYRK1A, probably in the RS domain. Phosphorylation by DYRK1A modulates alternative splice site selection and inhibits the expression of MAPT/Tau exon 10.

It is found in the nucleus. It localises to the nucleus speckle. In terms of biological role, plays a role in constitutive splicing and modulates the selection of alternative splice sites. Plays a role in the alternative splicing of MAPT/Tau exon 10. Binds to alternative exons of TNC pre-mRNA and promotes the expression of alternatively spliced TNC. Plays a role in wound healing and in the regulation of keratinocyte differentiation and proliferation via its role in alternative splicing. The polypeptide is Serine/arginine-rich splicing factor 6 (SRSF6) (Bos taurus (Bovine)).